Consider the following 158-residue polypeptide: Endoribonuclease YbeY (158 aa).

Zn(2+) is bound by residues histidine 118, histidine 122, and histidine 128.

Belongs to the endoribonuclease YbeY family. It depends on Zn(2+) as a cofactor.

It is found in the cytoplasm. Single strand-specific metallo-endoribonuclease involved in late-stage 70S ribosome quality control and in maturation of the 3' terminus of the 16S rRNA. This chain is Endoribonuclease YbeY, found in Bartonella quintana (strain Toulouse) (Rochalimaea quintana).